We begin with the raw amino-acid sequence, 445 residues long: Mannan endo-1,4-beta-mannosidase 2 (445 aa).

Residues methionine 1 to glycine 27 form the signal peptide. Tryptophan 110 is a substrate binding site. A glycan (N-linked (GlcNAc...) asparagine) is linked at asparagine 181. Asparagine 226 lines the substrate pocket. The active-site Proton donor is the glutamate 227. A substrate-binding site is contributed by tyrosine 309. The active-site Nucleophile is glutamate 349. Residue tryptophan 391 participates in substrate binding.

It belongs to the glycosyl hydrolase 5 (cellulase A) family. Expressed in stems and seeds, and at lower levels in roots and leaves.

It is found in the secreted. It carries out the reaction Random hydrolysis of (1-&gt;4)-beta-D-mannosidic linkages in mannans, galactomannans and glucomannans.. The sequence is that of Mannan endo-1,4-beta-mannosidase 2 (MAN2) from Oryza sativa subsp. japonica (Rice).